The sequence spans 729 residues: Serine/threonine-protein kinase TBK1 (729 aa).

A Protein kinase domain is found at 9-310 (WLLSDILGQG…ETSDILHRMV (302 aa)). 15–23 (LGQGATANV) is an ATP binding site. A Glycyl lysine isopeptide (Lys-Gly) (interchain with G-Cter in ubiquitin) cross-link involves residue lysine 30. Lysine 38 contacts ATP. Aspartate 135 functions as the Proton acceptor in the catalytic mechanism. Position 172 is a phosphoserine; by autocatalysis and IKKB (serine 172). The Ubiquitin-like domain maps to 309 to 385 (MVIHVFSLQQ…ENPIFVVSRE (77 aa)). Residue lysine 401 forms a Glycyl lysine isopeptide (Lys-Gly) (interchain with G-Cter in ubiquitin) linkage. 2 coiled-coil regions span residues 407–657 (DLDG…LQET) and 658–713 (LPQK…ILER). Lysine 607 is modified (N6-methyllysine; by SETD4). The interaction with AZI2, TANK and TBKBP1 stretch occupies residues 621–729 (RKMLHLRKQL…DGGLRNVDCL (109 aa)). Lysine 670 participates in a covalent cross-link: Glycyl lysine isopeptide (Lys-Gly) (interchain with G-Cter in ubiquitin). Residue serine 716 is modified to Phosphoserine.

This sequence belongs to the protein kinase superfamily. Ser/Thr protein kinase family. I-kappa-B kinase subfamily. As to quaternary structure, homodimer. Interacts with DDX3X, TIRAP and TRAF2. Part of a ternary complex consisting of TANK, TRAF2 and TBK1. Interacts with AZI2, TANK and TBKBP1; these interactions are mutually exclusive and mediate TBK1 activation. Interacts with GSK3B; this interaction promotes TBK1 self-association and autophosphorylation. Interacts with SIKE1; SIKE1 is associated with TBK1 under physiological condition and dissociated from TBK1 upon viral infection or TLR3 stimulation. Interacts with IRF3, leading to IRF3 phosphorylation. Interacts with RIGI. Interacts with CYLD. Interacts with OPTN and TRAF3. Interacts with SRC. Interacts with the exocyst complex subunit SEC5/EXOC2; this interaction is sufficient to trigger TBK1 activity. Interacts with STING1, leading to STING1 phosphorylation. Interacts with IFIT3 (via N-terminus). Interacts with MAVS; interaction only takes place in the presence of IFIT3 and leads to MAVS phosphorylation. Interacts (via protein kinase domain) with TTLL12 (via TTL domain); the interaction prevents MAVS binding to TBK1. Interacts with TICAM1; this interaction is enhanced in the presence of WDFY1 and leads to TICAM1 phosphorylation. Interacts with TRIM26. Interacts with TRIM23. Interacts with TTC4 and IKBKE. Interacts with HNRNPA2B1. Interacts with DDX3X. Interacts with TRIM14. Interacts with CEP170; efficient complex formation may be dependent on the presence of CCDC61. Interacts with TRAF3IP3. Interacts with HSP90AA1; the interaction mediates TBK1 association with TOMM70. Interacts with TAX1BP1. Interacts with kinase IKBKB; the complex interacts with STAT1, leading to phosphorylation of STAT1 on 'Thr-749' by IKBKB. Interacts with ICOS; this interaction is critical for the maturation of T follicular regulatory cells. Interacts with RNF144B; this interaction prevents TBK1 phosphorylation and subsequent activation. Interacts with ASB8; this interaction promotes TBK1 proteasomal degradation. Forms a ternary complex with ZNF268 and SETD4; the interaction with SETD4 is ZNF268-dependent and leads to TBK1 monomethylation, which enhances its interaction with IRF3 and MAVS. (Microbial infection) Interacts with Borna disease virus (BDV) P protein leading to its phosphorylation. In terms of assembly, (Microbial infection) Interacts with Ebola virus protein VP35. As to quaternary structure, (Microbial infection) Interacts with HCV NS3; this interaction leads to inhibition of cellular antiviral response by blocking necessary interactions between the TBK1 and its substrates IRF3 and IRF7. (Microbial infection) Interacts with human herpesvirus 1 protein ICP34.5. In terms of assembly, (Microbial infection) Interacts with Zika virus non-structural protein 1/NS1 and non-structural protein 4B/NS4B. As to quaternary structure, (Microbial infection) Interacts with SARS-CoV-2 non-structural protein 6; this interaction decreases IRF3 phosphorylation by 57%, which leads to reduced IFN-beta (IFNB) production. Interacts with SARS-CoV-2 helicase; this interaction inhibits TBK1 phosphorylation and decreases IRF3 phosphorylation by 75%, which leads to reduced IFN-beta production. Interacts with SARS-CoV-2 M protein; the interaction promotes TBK1 degradation via 'Lys-48'-linked ubiquitination. (Microbial infection) Interacts with human cytomegalovirus protein UL35; this interaction inhibits type I interferon production. In terms of assembly, (Microbial infection) Interacts with heartland virus NSs; this interaction antagonizes TBK1 phosphorylation and inhibits TBK1-IRF3 interaction and thus the establishment of an antiviral state. As to quaternary structure, (Microbial infection) Interacts (via N-terminus) with Severe fever with thrombocytopenia virus (SFTSV) NSs; this interaction antagonizes TBK1 phosphorylation and sequesters TBK1 in NSs-induced cytoplasmic inclusion bodies thereby inhibiting the IFN responses. In terms of processing, autophosphorylation at Ser-172 activates the kinase, and is an essential step for virus-triggered signaling. Phosphorylated by IKBKB/IKKB at Ser-172. Phosphorylation requires homodimerization and ubiquitination at Lys-30 and Lys-401. Dephosphorylated at Ser-172 by PPM1B and this negatively regulates its role in mediating antiviral response. 'Lys-63'-linked polyubiquitination by MIB1 after RNA virus infection, or by NRDP1 after LPS stimulation at Lys-30 and Lys-401, participates in kinase activation. 'Lys-48'-linked polyubiquitination at Lys-670 by DTX4 leads to proteasomal degradation. 'Lys-48'-linked polyubiquitination by TRAIP also leads to proteasomal degradation. 'Lys-48'-linked polyubiquitination by TRAF7; leading to proteasomal degradation. 'Lys-63'-linked polyubiquitination by RNF128 at Lys-30 and Lys-401 leads to the activation of antiviral responses. 'Lys-48'-linked polyubiquitination after 'lys-33'-linked deubiquitination by USP38 promotes TBK1 degradation. Post-translationally, (Microbial infection) Interaction with SARS-CoV-2 M protein induces 'Lys-48'-linked ubiquitination which leads to proteasomal degradation. In terms of processing, (Microbial infection) Deubiquitinated by Epstein-Barr virus BPLF1 on both 'Lys-48' and 'Lys-63'-linked ubiquitin chains; leading to inhibition of type I interfewron production. Monomethylation at Lys-607 by SETD4 maximizes TBK1 activation and promotes efficient interferon signaling. As to expression, ubiquitous with higher expression in testis. Expressed in the ganglion cells, nerve fiber layer and microvasculature of the retina.

It localises to the cytoplasm. The enzyme catalyses L-seryl-[protein] + ATP = O-phospho-L-seryl-[protein] + ADP + H(+). It catalyses the reaction L-threonyl-[protein] + ATP = O-phospho-L-threonyl-[protein] + ADP + H(+). Functionally, serine/threonine kinase that plays an essential role in regulating inflammatory responses to foreign agents. Following activation of toll-like receptors by viral or bacterial components, associates with TRAF3 and TANK and phosphorylates interferon regulatory factors (IRFs) IRF3 and IRF7 as well as DDX3X. This activity allows subsequent homodimerization and nuclear translocation of the IRFs leading to transcriptional activation of pro-inflammatory and antiviral genes including IFNA and IFNB. In order to establish such an antiviral state, TBK1 form several different complexes whose composition depends on the type of cell and cellular stimuli. Plays a key role in IRF3 activation: acts by first phosphorylating innate adapter proteins MAVS, STING1 and TICAM1 on their pLxIS motif, leading to recruitment of IRF3, thereby licensing IRF3 for phosphorylation by TBK1. Phosphorylated IRF3 dissociates from the adapter proteins, dimerizes, and then enters the nucleus to induce expression of interferons. Thus, several scaffolding molecules including FADD, TRADD, MAVS, AZI2, TANK or TBKBP1/SINTBAD can be recruited to the TBK1-containing-complexes. Under particular conditions, functions as a NF-kappa-B effector by phosphorylating NF-kappa-B inhibitor alpha/NFKBIA, IKBKB or RELA to translocate NF-Kappa-B to the nucleus. Restricts bacterial proliferation by phosphorylating the autophagy receptor OPTN/Optineurin on 'Ser-177', thus enhancing LC3 binding affinity and antibacterial autophagy. Phosphorylates SMCR8 component of the C9orf72-SMCR8 complex, promoting autophagosome maturation. Phosphorylates ATG8 proteins MAP1LC3C and GABARAPL2, thereby preventing their delipidation and premature removal from nascent autophagosomes. Seems to play a role in energy balance regulation by sustaining a state of chronic, low-grade inflammation in obesity, which leads to a negative impact on insulin sensitivity. Attenuates retroviral budding by phosphorylating the endosomal sorting complex required for transport-I (ESCRT-I) subunit VPS37C. Phosphorylates Borna disease virus (BDV) P protein. Plays an essential role in the TLR3- and IFN-dependent control of herpes virus HSV-1 and HSV-2 infections in the central nervous system. Acts both as a positive and negative regulator of the mTORC1 complex, depending on the context: activates mTORC1 in response to growth factors by catalyzing phosphorylation of MTOR, while it limits the mTORC1 complex by promoting phosphorylation of RPTOR. Acts as a positive regulator of the mTORC2 complex by mediating phosphorylation of MTOR, leading to increased phosphorylation and activation of AKT1. Phosphorylates and activates AKT1. Involved in the regulation of TNF-induced RIPK1-mediated cell death, probably acting via CYLD phosphorylation that in turn controls RIPK1 ubiquitination status. Also participates in the differentiation of T follicular regulatory cells together with the receptor ICOS. This chain is Serine/threonine-protein kinase TBK1, found in Homo sapiens (Human).